The following is a 508-amino-acid chain: NAD(P)H-quinone oxidoreductase subunit 2 B, chloroplastic (508 aa).

A run of 13 helical transmembrane segments spans residues 24-44 (LLLFDGSLIFPECILIFGLIL), 59-79 (WLYFISSTSLVMSITALLFRW), 99-119 (IFQFLILLCSTLCIPLSVEYI), 124-144 (MAITEFLLFVLTATLGGMFLC), 149-169 (FITIFVAPECFSLCSYLLSGY), 184-204 (LLMGGASSSILVHGFSWLYGL), 227-247 (PGISIALIFITVGIGFKLSPA), 295-315 (WHLLLEILAILSMILGNLIAI), 323-343 (MLAYSSIGQIGYVIIGIIVGD), 354-374 (YMLFYISMNLGAFACIVLFGL), 395-415 (ALSLALCLLSLGGLPPLAGFF), 418-438 (LYLFWCGWQAGLYFLVFIGLL), and 482-502 (MIVCVIASTIPGISMNPIIAI).

It belongs to the complex I subunit 2 family. NDH is composed of at least 16 different subunits, 5 of which are encoded in the nucleus.

The protein resides in the plastid. Its subcellular location is the chloroplast thylakoid membrane. The enzyme catalyses a plastoquinone + NADH + (n+1) H(+)(in) = a plastoquinol + NAD(+) + n H(+)(out). It catalyses the reaction a plastoquinone + NADPH + (n+1) H(+)(in) = a plastoquinol + NADP(+) + n H(+)(out). Its function is as follows. NDH shuttles electrons from NAD(P)H:plastoquinone, via FMN and iron-sulfur (Fe-S) centers, to quinones in the photosynthetic chain and possibly in a chloroplast respiratory chain. The immediate electron acceptor for the enzyme in this species is believed to be plastoquinone. Couples the redox reaction to proton translocation, and thus conserves the redox energy in a proton gradient. The sequence is that of NAD(P)H-quinone oxidoreductase subunit 2 B, chloroplastic from Ipomoea purpurea (Common morning glory).